The chain runs to 1040 residues: Multidrug resistance protein MdtB (1040 aa).

Transmembrane regions (helical) follow at residues 16–36 (FIMRPVATTLLMVAILLAGII), 347–367 (LMMAIALVVMIIYLFLRNIPA), 369–389 (IIPGVAVPLSLIGTFAVMVFL), 396–416 (LTLMALTIATGFVVDDAIVVI), 440–460 (IGFTIISLTFSLIAVLIPLLF), 472–492 (FAITLAVAILISAVVSLTLTP), 537–557 (WLTLSVALSTLLLSVLLWVFI), 863–883 (LGSTVWLIVAAVVAMYIVLGI), 888–908 (FIHPITILSTLPTAGVGALLA), 911–931 (IAGSELDVIAIIGIILLIGIV), 968–988 (ILMTTLAALLGALPLMLSTGV), and 998–1018 (IGMVGGLIVSQVLTLFTTPVI).

It belongs to the resistance-nodulation-cell division (RND) (TC 2.A.6) family. MdtB subfamily. As to quaternary structure, part of a tripartite efflux system composed of MdtA, MdtB and MdtC. MdtB forms a heteromultimer with MdtC.

It is found in the cell inner membrane. Its function is as follows. The MdtABC tripartite complex confers resistance against novobiocin and deoxycholate. The polypeptide is Multidrug resistance protein MdtB (Escherichia coli O81 (strain ED1a)).